Here is a 218-residue protein sequence, read N- to C-terminus: Probable transaldolase (218 aa).

The Schiff-base intermediate with substrate role is filled by lysine 87.

It belongs to the transaldolase family. Type 3B subfamily.

Its subcellular location is the cytoplasm. The catalysed reaction is D-sedoheptulose 7-phosphate + D-glyceraldehyde 3-phosphate = D-erythrose 4-phosphate + beta-D-fructose 6-phosphate. Its pathway is carbohydrate degradation; pentose phosphate pathway; D-glyceraldehyde 3-phosphate and beta-D-fructose 6-phosphate from D-ribose 5-phosphate and D-xylulose 5-phosphate (non-oxidative stage): step 2/3. Transaldolase is important for the balance of metabolites in the pentose-phosphate pathway. In Bacteroides fragilis (strain ATCC 25285 / DSM 2151 / CCUG 4856 / JCM 11019 / LMG 10263 / NCTC 9343 / Onslow / VPI 2553 / EN-2), this protein is Probable transaldolase.